The chain runs to 330 residues: DNA-directed RNA polymerase subunit alpha (330 aa).

Residues M1–R236 are alpha N-terminal domain (alpha-NTD). The tract at residues F250–N330 is alpha C-terminal domain (alpha-CTD).

This sequence belongs to the RNA polymerase alpha chain family. As to quaternary structure, homodimer. The RNAP catalytic core consists of 2 alpha, 1 beta, 1 beta' and 1 omega subunit. When a sigma factor is associated with the core the holoenzyme is formed, which can initiate transcription.

The catalysed reaction is RNA(n) + a ribonucleoside 5'-triphosphate = RNA(n+1) + diphosphate. In terms of biological role, DNA-dependent RNA polymerase catalyzes the transcription of DNA into RNA using the four ribonucleoside triphosphates as substrates. This Blochmanniella pennsylvanica (strain BPEN) protein is DNA-directed RNA polymerase subunit alpha.